The sequence spans 581 residues: Probable CDP-diacylglycerol--glycerol-3-phosphate 3-phosphatidyltransferase (581 aa).

A disordered region spans residues 27 to 65 (RSATTTTTTTTKACGNGSSQSPPSTPLLSSKSSTITSNK). Residues 44 to 65 (SSQSPPSTPLLSSKSSTITSNK) show a composition bias toward low complexity. Residue 160-167 (ASLYLGTS) participates in ATP binding. PLD phosphodiesterase domains are found at residues 248-274 (TIGVQHIKTYIFDDDLLLSGANLSKDY) and 487-520 (DKWTYHAKGLWIQVKNQQHPSITLIGSPNFGSRS). Catalysis depends on residues His-253, Lys-255, and Asp-260.

It belongs to the CDP-alcohol phosphatidyltransferase class-II family.

It carries out the reaction a CDP-1,2-diacyl-sn-glycerol + sn-glycerol 3-phosphate = a 1,2-diacyl-sn-glycero-3-phospho-(1'-sn-glycero-3'-phosphate) + CMP + H(+). Its pathway is phospholipid metabolism; phosphatidylglycerol biosynthesis; phosphatidylglycerol from CDP-diacylglycerol: step 1/2. Functionally, functions in the biosynthesis of the anionic phospholipids phosphatidylglycerol and cardiolipin. The sequence is that of Probable CDP-diacylglycerol--glycerol-3-phosphate 3-phosphatidyltransferase (pgs1) from Dictyostelium discoideum (Social amoeba).